The primary structure comprises 204 residues: Octanoyltransferase (204 aa).

Positions 27–202 (QGGEEALLLL…RFQPFLHLHL (176 aa)) constitute a BPL/LPL catalytic domain. Substrate contacts are provided by residues 65-72 (RGGDVTYH), 132-134 (SIG), and 145-147 (GFA). Catalysis depends on C163, which acts as the Acyl-thioester intermediate.

The protein belongs to the LipB family.

The protein resides in the cytoplasm. It carries out the reaction octanoyl-[ACP] + L-lysyl-[protein] = N(6)-octanoyl-L-lysyl-[protein] + holo-[ACP] + H(+). It functions in the pathway protein modification; protein lipoylation via endogenous pathway; protein N(6)-(lipoyl)lysine from octanoyl-[acyl-carrier-protein]: step 1/2. Its function is as follows. Catalyzes the transfer of endogenously produced octanoic acid from octanoyl-acyl-carrier-protein onto the lipoyl domains of lipoate-dependent enzymes. Lipoyl-ACP can also act as a substrate although octanoyl-ACP is likely to be the physiological substrate. The polypeptide is Octanoyltransferase (Geobacter sp. (strain M21)).